The following is a 233-amino-acid chain: Probable chemoreceptor glutamine deamidase CheD (233 aa).

Belongs to the CheD family.

It catalyses the reaction L-glutaminyl-[protein] + H2O = L-glutamyl-[protein] + NH4(+). Functionally, probably deamidates glutamine residues to glutamate on methyl-accepting chemotaxis receptors (MCPs), playing an important role in chemotaxis. This Ralstonia nicotianae (strain ATCC BAA-1114 / GMI1000) (Ralstonia solanacearum) protein is Probable chemoreceptor glutamine deamidase CheD.